A 360-amino-acid chain; its full sequence is DNA replication and repair protein RecF (360 aa).

30-37 (GQNGSGKT) is a binding site for ATP.

The protein belongs to the RecF family.

The protein resides in the cytoplasm. The RecF protein is involved in DNA metabolism; it is required for DNA replication and normal SOS inducibility. RecF binds preferentially to single-stranded, linear DNA. It also seems to bind ATP. The chain is DNA replication and repair protein RecF from Shewanella sp. (strain W3-18-1).